The chain runs to 280 residues: Acetylglutamate kinase (280 aa).

Residues 57–58 (GG), R79, and N174 each bind substrate.

It belongs to the acetylglutamate kinase family. ArgB subfamily.

Its subcellular location is the cytoplasm. The enzyme catalyses N-acetyl-L-glutamate + ATP = N-acetyl-L-glutamyl 5-phosphate + ADP. The protein operates within amino-acid biosynthesis; L-arginine biosynthesis; N(2)-acetyl-L-ornithine from L-glutamate: step 2/4. In terms of biological role, catalyzes the ATP-dependent phosphorylation of N-acetyl-L-glutamate. The protein is Acetylglutamate kinase of Helicobacter hepaticus (strain ATCC 51449 / 3B1).